The sequence spans 610 residues: UvrABC system protein C (610 aa).

A GIY-YIG domain is found at 16–94 (HQPGVYRMYN…IKQYLPKYNV (79 aa)). One can recognise a UVR domain in the interval 204–239 (NQVLELLVQKMEIASQQLKFEDAAKFRDQIQAIRRV).

Belongs to the UvrC family. As to quaternary structure, interacts with UvrB in an incision complex.

It localises to the cytoplasm. Functionally, the UvrABC repair system catalyzes the recognition and processing of DNA lesions. UvrC both incises the 5' and 3' sides of the lesion. The N-terminal half is responsible for the 3' incision and the C-terminal half is responsible for the 5' incision. In Vibrio vulnificus (strain CMCP6), this protein is UvrABC system protein C.